A 259-amino-acid chain; its full sequence is 3'-5' ssDNA/RNA exonuclease TatD (259 aa).

A divalent metal cation contacts are provided by glutamate 92, histidine 128, and histidine 153.

It belongs to the metallo-dependent hydrolases superfamily. TatD-type hydrolase family. TatD subfamily. Monomer. Requires Mg(2+) as cofactor.

The protein resides in the cytoplasm. 3'-5' exonuclease that prefers single-stranded DNA and RNA. May play a role in the H(2)O(2)-induced DNA damage repair. This Erwinia tasmaniensis (strain DSM 17950 / CFBP 7177 / CIP 109463 / NCPPB 4357 / Et1/99) protein is 3'-5' ssDNA/RNA exonuclease TatD.